A 427-amino-acid polypeptide reads, in one-letter code: UDP-N-acetylglucosamine 1-carboxyvinyltransferase 1 (427 aa).

Residue 23-24 (KN) participates in phosphoenolpyruvate binding. R96 is a UDP-N-acetyl-alpha-D-glucosamine binding site. The active-site Proton donor is C120. C120 is modified (2-(S-cysteinyl)pyruvic acid O-phosphothioketal). Residues 125–129 (RPIDL), D309, and V331 contribute to the UDP-N-acetyl-alpha-D-glucosamine site.

Belongs to the EPSP synthase family. MurA subfamily.

The protein resides in the cytoplasm. The catalysed reaction is phosphoenolpyruvate + UDP-N-acetyl-alpha-D-glucosamine = UDP-N-acetyl-3-O-(1-carboxyvinyl)-alpha-D-glucosamine + phosphate. Its pathway is cell wall biogenesis; peptidoglycan biosynthesis. Cell wall formation. Adds enolpyruvyl to UDP-N-acetylglucosamine. The sequence is that of UDP-N-acetylglucosamine 1-carboxyvinyltransferase 1 from Streptococcus pneumoniae serotype 4 (strain ATCC BAA-334 / TIGR4).